The following is a 221-amino-acid chain: Uracil-DNA glycosylase 1 (221 aa).

Asp-61 (proton acceptor) is an active-site residue.

This sequence belongs to the uracil-DNA glycosylase (UDG) superfamily. UNG family.

Its subcellular location is the cytoplasm. The enzyme catalyses Hydrolyzes single-stranded DNA or mismatched double-stranded DNA and polynucleotides, releasing free uracil.. In terms of biological role, excises uracil residues from the DNA which can arise as a result of misincorporation of dUMP residues by DNA polymerase or due to deamination of cytosine. This chain is Uracil-DNA glycosylase 1, found in Listeria monocytogenes serovar 1/2a (strain ATCC BAA-679 / EGD-e).